The sequence spans 410 residues: Multifunctional CCA protein (410 aa).

ATP is bound by residues Gly-8 and Arg-11. Residues Gly-8 and Arg-11 each contribute to the CTP site. Glu-21 and Asp-23 together coordinate Mg(2+). Arg-91, Arg-137, and Arg-140 together coordinate ATP. CTP contacts are provided by Arg-91, Arg-137, and Arg-140. One can recognise an HD domain in the interval 228–329 (TGIHSLMTLR…VKLLEQVDAF (102 aa)).

It belongs to the tRNA nucleotidyltransferase/poly(A) polymerase family. Bacterial CCA-adding enzyme type 1 subfamily. Monomer. Can also form homodimers and oligomers. Requires Mg(2+) as cofactor. Ni(2+) serves as cofactor.

It carries out the reaction a tRNA precursor + 2 CTP + ATP = a tRNA with a 3' CCA end + 3 diphosphate. It catalyses the reaction a tRNA with a 3' CCA end + 2 CTP + ATP = a tRNA with a 3' CCACCA end + 3 diphosphate. Catalyzes the addition and repair of the essential 3'-terminal CCA sequence in tRNAs without using a nucleic acid template. Adds these three nucleotides in the order of C, C, and A to the tRNA nucleotide-73, using CTP and ATP as substrates and producing inorganic pyrophosphate. tRNA 3'-terminal CCA addition is required both for tRNA processing and repair. Also involved in tRNA surveillance by mediating tandem CCA addition to generate a CCACCA at the 3' terminus of unstable tRNAs. While stable tRNAs receive only 3'-terminal CCA, unstable tRNAs are marked with CCACCA and rapidly degraded. The sequence is that of Multifunctional CCA protein from Legionella pneumophila subsp. pneumophila (strain Philadelphia 1 / ATCC 33152 / DSM 7513).